We begin with the raw amino-acid sequence, 956 residues long: Chromatin assembly factor 1 subunit A (956 aa).

Positions 1–49 (MLEELECGAPGARGAATAMDCKDRPAFPVKKLIQARLPFKRLNLVPKGK) are binds to PCNA. A binds to CBX1 chromo shadow domain region spans residues 1-314 (MLEELECGAP…QHSSTSPFPT (314 aa)). Disordered stretches follow at residues 45–65 (VPKG…QSKS) and 122–155 (DSNE…EDTG). The segment covering 56–65 (DQGTSVQSKS) has biased composition (polar residues). Ser-65, Ser-123, Ser-138, Ser-141, and Ser-143 each carry phosphoserine. A Glycyl lysine isopeptide (Lys-Gly) (interchain with G-Cter in SUMO1); alternate cross-link involves residue Lys-182. Lys-182 is covalently cross-linked (Glycyl lysine isopeptide (Lys-Gly) (interchain with G-Cter in SUMO2); alternate). Residues 188–222 (VGCGGAGRRGDSQECSPRSCPELTSGPRMCPRKEQ) are disordered. Ser-206 and Ser-224 each carry phosphoserine. The PxVxL motif motif lies at 233 to 246 (FKGKVPMVVLQDIL). Disordered stretches follow at residues 250-432 (PPQI…KRLR) and 599-639 (DSDE…VPHG). Low complexity-rich tracts occupy residues 282–296 (LSHS…TSSP) and 307–317 (SSTSPFPTSTP). Residue Ser-310 is modified to Phosphoserine. Basic and acidic residues predominate over residues 329–432 (STEKNKLRLQ…RKKEEEKRLR (104 aa)). 2 stretches are compositionally biased toward acidic residues: residues 599 to 610 (DSDEEWEEEEPG) and 618 to 633 (GDDD…EDDG). The necessary for homodimerization and competence for chromatin assembly stretch occupies residues 642 to 678 (SEDEGVTEECADPENHKVRQKLKAKEWDEFLAKGKRF). Positions 660–956 (RQKLKAKEWD…TLTASPLGAS (297 aa)) are binds to p60. Residue Thr-722 is modified to Phosphothreonine. Residues 765-790 (LLSNHTGSPRSPSTTYLHTPTPSEDA) form a disordered region. Polar residues predominate over residues 767-786 (SNHTGSPRSPSTTYLHTPTP). Phosphoserine is present on residues Ser-772, Ser-775, and Ser-803. Disordered regions lie at residues 844–873 (SVPS…KRKS) and 933–956 (SGAG…LGAS). A compositionally biased stretch (polar residues) spans 855-866 (SVPSTGPSQGTP). Phosphothreonine is present on Thr-865. 3 positions are modified to phosphoserine: Ser-868, Ser-873, and Ser-951.

This sequence belongs to the CHAF1A family. As to quaternary structure, homodimer. Part of the CAF-1 complex that contains RBBP4, CHAF1B and CHAF1A. CHAF1A binds directly to CHAF1B. Only minor amounts of RBBP4 are complexed with CHAF1A and CHAF1B in G1 phase. Interacts with PCNA; the interaction is direct. Interacts (via the PxVxL motif) with CBX5; the interaction is direct. Interacts with MBD1. Interacts with histones H3.1, H3.2 and H3.1t.

Its subcellular location is the nucleus. Acts as a component of the histone chaperone complex chromatin assembly factor 1 (CAF-1), which assembles histone octamers onto DNA during replication and repair. CAF-1 performs the first step of the nucleosome assembly process, bringing newly synthesized histones H3 and H4 to replicating DNA; histones H2A/H2B can bind to this chromatin precursor subsequent to DNA replication to complete the histone octamer. It may play a role in heterochromatin maintenance in proliferating cells by bringing newly synthesized cbx proteins to heterochromatic DNA replication foci. The sequence is that of Chromatin assembly factor 1 subunit A from Homo sapiens (Human).